Consider the following 482-residue polypeptide: Capsule synthesis positive regulator AcpB (482 aa).

PRD domains follow at residues 165–270 (PFEK…YKDI) and 283–395 (EGNL…YTSN).

It belongs to the AtxA/AcpA family.

Functionally, acpB and AcpA regulate cap gene expression and capsule synthesis. The sequence is that of Capsule synthesis positive regulator AcpB (acpB) from Bacillus anthracis.